Consider the following 824-residue polypeptide: Leucine--tRNA ligase (824 aa).

The 'HIGH' region motif lies at 41 to 51; that stretch reads PYPSGTLHVGH. Positions 580–584 match the 'KMSKS' region motif; sequence KMSKS. Position 583 (Lys-583) interacts with ATP.

It belongs to the class-I aminoacyl-tRNA synthetase family.

It localises to the cytoplasm. The catalysed reaction is tRNA(Leu) + L-leucine + ATP = L-leucyl-tRNA(Leu) + AMP + diphosphate. In Thermotoga petrophila (strain ATCC BAA-488 / DSM 13995 / JCM 10881 / RKU-1), this protein is Leucine--tRNA ligase.